The primary structure comprises 214 residues: MTIAHKDFLPSDWHEDDSASEAASRNGLDPMMDAVRTLLVGVGEDPERNGLERTPKRVAEALKFLTKGYGQSLEELLNGAIFDLGHDELVLVRDIDLFSMCEHHMLPFIGRAHVGYIPDQKVVGLSKLARIVEMYARRLQVQERLTRQIAEALQEVLQPRGVAVVIEASHMCMVMRGVQKPNSWTVTSSMVGVFKESQSTRQEFLDLIHHKATF.

Residues cysteine 101, histidine 104, and cysteine 172 each coordinate Zn(2+).

Belongs to the GTP cyclohydrolase I family. As to quaternary structure, toroid-shaped homodecamer, composed of two pentamers of five dimers.

It carries out the reaction GTP + H2O = 7,8-dihydroneopterin 3'-triphosphate + formate + H(+). It functions in the pathway cofactor biosynthesis; 7,8-dihydroneopterin triphosphate biosynthesis; 7,8-dihydroneopterin triphosphate from GTP: step 1/1. This Gloeobacter violaceus (strain ATCC 29082 / PCC 7421) protein is GTP cyclohydrolase 1.